Here is a 279-residue protein sequence, read N- to C-terminus: Thymidylate synthase (279 aa).

Residue 133–134 (RR) coordinates dUMP. The active-site Nucleophile is the cysteine 154. DUMP contacts are provided by residues 178 to 181 (RSND), asparagine 189, and 219 to 221 (HIY). Aspartate 181 is a binding site for (6R)-5,10-methylene-5,6,7,8-tetrahydrofolate. Alanine 278 contacts (6R)-5,10-methylene-5,6,7,8-tetrahydrofolate.

This sequence belongs to the thymidylate synthase family. Bacterial-type ThyA subfamily. As to quaternary structure, homodimer.

The protein resides in the cytoplasm. The enzyme catalyses dUMP + (6R)-5,10-methylene-5,6,7,8-tetrahydrofolate = 7,8-dihydrofolate + dTMP. Its pathway is pyrimidine metabolism; dTTP biosynthesis. Catalyzes the reductive methylation of 2'-deoxyuridine-5'-monophosphate (dUMP) to 2'-deoxythymidine-5'-monophosphate (dTMP) while utilizing 5,10-methylenetetrahydrofolate (mTHF) as the methyl donor and reductant in the reaction, yielding dihydrofolate (DHF) as a by-product. This enzymatic reaction provides an intracellular de novo source of dTMP, an essential precursor for DNA biosynthesis. This chain is Thymidylate synthase, found in Streptococcus suis (strain 05ZYH33).